A 217-amino-acid chain; its full sequence is Protein-L-isoaspartate O-methyltransferase (217 aa).

Ser-67 is an active-site residue.

It belongs to the methyltransferase superfamily. L-isoaspartyl/D-aspartyl protein methyltransferase family.

Its subcellular location is the cytoplasm. It carries out the reaction [protein]-L-isoaspartate + S-adenosyl-L-methionine = [protein]-L-isoaspartate alpha-methyl ester + S-adenosyl-L-homocysteine. In terms of biological role, catalyzes the methyl esterification of L-isoaspartyl residues in peptides and proteins that result from spontaneous decomposition of normal L-aspartyl and L-asparaginyl residues. It plays a role in the repair and/or degradation of damaged proteins. In Azoarcus sp. (strain BH72), this protein is Protein-L-isoaspartate O-methyltransferase.